The primary structure comprises 446 residues: AP-2 complex subunit mu (446 aa).

3 positions are modified to phosphoserine: S145, S151, and S152. Residue T157 is modified to Phosphothreonine. Residues 177 to 445 enclose the MHD domain; that stretch reads KNSIYIDIVE…STRAGTCEIR (269 aa).

Belongs to the adaptor complexes medium subunit family. As to quaternary structure, adaptor protein complex 2 (AP-2) is a heterotetramer composed of two large adaptins (alpha-type subunit apl3 and beta-type subunit apl1), a medium chain (mu-type subunit apm4) and a small adaptin (sigma-type subunit aps2).

Its subcellular location is the cell membrane. It is found in the membrane. The protein resides in the coated pit. Functionally, component of the adaptor complexes which link clathrin to receptors in coated vesicles. Clathrin-associated protein complexes are believed to interact with the cytoplasmic tails of membrane proteins, leading to their selection and concentration. AP50 is a subunit of the plasma membrane adaptor (Potential). The chain is AP-2 complex subunit mu (apm4) from Schizosaccharomyces pombe (strain 972 / ATCC 24843) (Fission yeast).